Consider the following 159-residue polypeptide: SsrA-binding protein (159 aa).

This sequence belongs to the SmpB family.

The protein resides in the cytoplasm. In terms of biological role, required for rescue of stalled ribosomes mediated by trans-translation. Binds to transfer-messenger RNA (tmRNA), required for stable association of tmRNA with ribosomes. tmRNA and SmpB together mimic tRNA shape, replacing the anticodon stem-loop with SmpB. tmRNA is encoded by the ssrA gene; the 2 termini fold to resemble tRNA(Ala) and it encodes a 'tag peptide', a short internal open reading frame. During trans-translation Ala-aminoacylated tmRNA acts like a tRNA, entering the A-site of stalled ribosomes, displacing the stalled mRNA. The ribosome then switches to translate the ORF on the tmRNA; the nascent peptide is terminated with the 'tag peptide' encoded by the tmRNA and targeted for degradation. The ribosome is freed to recommence translation, which seems to be the essential function of trans-translation. The sequence is that of SsrA-binding protein from Coxiella burnetii (strain CbuG_Q212) (Coxiella burnetii (strain Q212)).